Here is a 92-residue protein sequence, read N- to C-terminus: MNGNKDAIFKALGDSTRRLILDELSERNELTLYELTIRLITKYDLSITRQAIAKHLSVLEDAGLVTSKRKGKYRVLIFNNEPLKNLLKGWIE.

One can recognise an HTH arsR-type domain in the interval Met-1–Glu-92. A DNA-binding region (H-T-H motif) is located at residues Ile-37–Asp-61.

This is an uncharacterized protein from Bacillus subtilis (strain 168).